We begin with the raw amino-acid sequence, 74 residues long: uncharacterized protein (74 aa).

This is an uncharacterized protein from Homo sapiens (Human).